Reading from the N-terminus, the 694-residue chain is Elongation factor G (694 aa).

The tr-type G domain maps to 8-284 (EKLRNIGIVA…AVIDFLPSPV (277 aa)). GTP is bound by residues 17 to 24 (AHIDAGKT), 81 to 85 (DTPGH), and 135 to 138 (NKMD).

The protein belongs to the TRAFAC class translation factor GTPase superfamily. Classic translation factor GTPase family. EF-G/EF-2 subfamily.

The protein resides in the cytoplasm. Functionally, catalyzes the GTP-dependent ribosomal translocation step during translation elongation. During this step, the ribosome changes from the pre-translocational (PRE) to the post-translocational (POST) state as the newly formed A-site-bound peptidyl-tRNA and P-site-bound deacylated tRNA move to the P and E sites, respectively. Catalyzes the coordinated movement of the two tRNA molecules, the mRNA and conformational changes in the ribosome. This chain is Elongation factor G, found in Persephonella marina (strain DSM 14350 / EX-H1).